A 146-amino-acid polypeptide reads, in one-letter code: Large ribosomal subunit protein bL9 (146 aa).

The protein belongs to the bacterial ribosomal protein bL9 family.

Functionally, binds to the 23S rRNA. The chain is Large ribosomal subunit protein bL9 from Nautilia profundicola (strain ATCC BAA-1463 / DSM 18972 / AmH).